The chain runs to 38 residues: Mu/omega-theraphotoxin-Mb1b (38 aa).

Disulfide bonds link cysteine 7-cysteine 21, cysteine 14-cysteine 26, and cysteine 20-cysteine 33. Serine 38 carries the post-translational modification Serine amide.

The protein belongs to the neurotoxin 10 (Hwtx-1) family. 28 (Jztx-11) subfamily. Expressed by the venom gland.

Its subcellular location is the secreted. Paralytic toxin on insects that inhibits voltage-gated sodium (Nav) and calcium (Cav) channels in P.americana (American cockroach) dorsal unpaired median (DUM) neurons, and also inhibits the B.germanica (German cockroach) Nav channel (BgNaV1). May act as a gating-modifier toxin on Nav and as a pore blocker on Cav. In vivo, reversibly paralyzes both L.cuprina (Australian sheep blowfly) and M.domestica (housefly), but does not affect larvae of H.armigera (cotton bollworms). The chain is Mu/omega-theraphotoxin-Mb1b from Monocentropus balfouri (Socotra Island blue baboon tarantula).